The sequence spans 354 residues: S-adenosylmethionine:tRNA ribosyltransferase-isomerase (354 aa).

This sequence belongs to the QueA family. In terms of assembly, monomer.

Its subcellular location is the cytoplasm. The enzyme catalyses 7-aminomethyl-7-carbaguanosine(34) in tRNA + S-adenosyl-L-methionine = epoxyqueuosine(34) in tRNA + adenine + L-methionine + 2 H(+). It participates in tRNA modification; tRNA-queuosine biosynthesis. In terms of biological role, transfers and isomerizes the ribose moiety from AdoMet to the 7-aminomethyl group of 7-deazaguanine (preQ1-tRNA) to give epoxyqueuosine (oQ-tRNA). The protein is S-adenosylmethionine:tRNA ribosyltransferase-isomerase of Salmonella newport (strain SL254).